The primary structure comprises 250 residues: Indole-3-glycerol phosphate synthase (250 aa).

Belongs to the TrpC family.

It catalyses the reaction 1-(2-carboxyphenylamino)-1-deoxy-D-ribulose 5-phosphate + H(+) = (1S,2R)-1-C-(indol-3-yl)glycerol 3-phosphate + CO2 + H2O. It participates in amino-acid biosynthesis; L-tryptophan biosynthesis; L-tryptophan from chorismate: step 4/5. In Picrophilus torridus (strain ATCC 700027 / DSM 9790 / JCM 10055 / NBRC 100828 / KAW 2/3), this protein is Indole-3-glycerol phosphate synthase.